The sequence spans 349 residues: Alcohol dehydrogenase 1 (349 aa).

Residues cysteine 46, histidine 69, cysteine 100, cysteine 103, cysteine 106, cysteine 114, and cysteine 156 each coordinate Zn(2+). Residues 180–186, aspartate 204, lysine 208, 270–272, and arginine 342 contribute to the NAD(+) site; these read GAGGGLG and VGL.

It belongs to the zinc-containing alcohol dehydrogenase family. As to quaternary structure, homotetramer. Requires Zn(2+) as cofactor.

The enzyme catalyses a primary alcohol + NAD(+) = an aldehyde + NADH + H(+). The catalysed reaction is a secondary alcohol + NAD(+) = a ketone + NADH + H(+). The protein is Alcohol dehydrogenase 1 of Caenorhabditis elegans.